Reading from the N-terminus, the 187-residue chain is Elongation factor P (187 aa).

The protein belongs to the elongation factor P family.

It is found in the cytoplasm. Its pathway is protein biosynthesis; polypeptide chain elongation. Functionally, involved in peptide bond synthesis. Stimulates efficient translation and peptide-bond synthesis on native or reconstituted 70S ribosomes in vitro. Probably functions indirectly by altering the affinity of the ribosome for aminoacyl-tRNA, thus increasing their reactivity as acceptors for peptidyl transferase. The chain is Elongation factor P from Sphingopyxis alaskensis (strain DSM 13593 / LMG 18877 / RB2256) (Sphingomonas alaskensis).